The primary structure comprises 208 residues: N-hydroxyputrescine acetyltransferase (208 aa).

Belongs to the IucB family.

It catalyses the reaction N-hydroxyputrescine + acetyl-CoA = N(1)-acetyl-N(1)-hydroxyputrescine + CoA. It functions in the pathway siderophore biosynthesis. Functionally, N-acetyltransferase involved in the biosynthesis of fimsbactin A, the major siderophore produced by A.baumannii. Catalyzes the acetylation of N-hydroxyputrescine to form N(1)-acetyl-N(1)-hydroxyputrescine (ahPutr). This is N-hydroxyputrescine acetyltransferase from Acinetobacter baumannii (strain ATCC 17978 / DSM 105126 / CIP 53.77 / LMG 1025 / NCDC KC755 / 5377).